The following is a 297-amino-acid chain: Polyketide transferase ATR5 (297 aa).

An abhydrolase domain region spans residues 49 to 272; sequence DVAVWFQKRG…FVLAENKGHM (224 aa).

It belongs to the polyketide transferase af380 family.

It functions in the pathway mycotoxin biosynthesis. Its function is as follows. Polyketide transferase; part of the core atranone cluster (CAC) which products are predicted to catalyze most or all steps of atranone synthesis, starting from geranylgeranyl pyrophosphate (GGPP). The initial cyclization of GGPP to dolabellane is probably performed by the terpene cyclase ATR13. The Baeyer-Villiger oxidation near the end of the atranone synthesis, which converts atranones D and E to atranones F and G is predicted to be catalyzed by the monooxygenase ATR8. Of the CAC's other predicted gene products, the reducing PKS ATR6 might synthesize a polyketide chain. This polyketide is probably transferred onto the atranone backbone by the polyketide transferase ATR5. Other predicted CAC products include 4 oxygenases (ATR2, ATR3, ATR4, and ATR14), 3 short-chain reductases (ATR7, ATR9, and ATR10), and a methyltransferase (ATR12). These may all be involved in the various steps of atranone biosynthesis, although their specific roles must await experimental determination. The polypeptide is Polyketide transferase ATR5 (Stachybotrys chlorohalonatus (strain IBT 40285)).